Here is a 455-residue protein sequence, read N- to C-terminus: Chromosomal replication initiator protein DnaA (455 aa).

Residues 1 to 73 (METSLETLWS…RDVVHEILGH (73 aa)) form a domain I, interacts with DnaA modulators region. Positions 73 to 116 (HPVEIQIEIAQGDSNATISAPEVASPPPTASPVENTNTSQRQQA) are domain II. Positions 92 to 116 (APEVASPPPTASPVENTNTSQRQQA) are disordered. Positions 104–116 (PVENTNTSQRQQA) are enriched in polar residues. The segment at 117-333 (SLNPKYVFSR…GALIRAVAYI (217 aa)) is domain III, AAA+ region. ATP is bound by residues Gly161, Gly163, Lys164, and Thr165. Positions 334 to 455 (SISGLPMNVE…GDRIKLANQP (122 aa)) are domain IV, binds dsDNA.

It belongs to the DnaA family. In terms of assembly, oligomerizes as a right-handed, spiral filament on DNA at oriC.

It localises to the cytoplasm. Plays an essential role in the initiation and regulation of chromosomal replication. ATP-DnaA binds to the origin of replication (oriC) to initiate formation of the DNA replication initiation complex once per cell cycle. Binds the DnaA box (a 9 base pair repeat at the origin) and separates the double-stranded (ds)DNA. Forms a right-handed helical filament on oriC DNA; dsDNA binds to the exterior of the filament while single-stranded (ss)DNA is stabiized in the filament's interior. The ATP-DnaA-oriC complex binds and stabilizes one strand of the AT-rich DNA unwinding element (DUE), permitting loading of DNA polymerase. After initiation quickly degrades to an ADP-DnaA complex that is not apt for DNA replication. Binds acidic phospholipids. The polypeptide is Chromosomal replication initiator protein DnaA (Acaryochloris marina (strain MBIC 11017)).